Consider the following 226-residue polypeptide: MTTIKHLAIIMDGNARWADQHNLTKSEGHKAGADKIRELLPEFINLNIPYITLYTFSSENWQRSSSEVNFLIKLLSLYLKNELDSLHENGVKIKVIGRLNLLRSSLQKQINNAIELTQNNNKIKLCIAFSYGSRQEIVDACTKIIANGKKQVSENDIQHALYDPEMPDVDLLIRSGGVYRISNFLLWQAAYAELYFSQKYWPDFNKDDIHEAINDYSKRKRTFGKR.

Asp-12 is an active-site residue. Asp-12 serves as a coordination point for Mg(2+). Substrate contacts are provided by residues 13-16 (GNAR), Trp-17, Lys-25, His-29, and 57-59 (SSE). The active-site Proton acceptor is the Asn-60. Substrate is bound by residues Trp-61, Arg-63, Arg-174, and 180 to 182 (RIS). Position 193 (Glu-193) interacts with Mg(2+).

The protein belongs to the UPP synthase family. Homodimer. Mg(2+) is required as a cofactor.

Its function is as follows. Catalyzes the condensation of isopentenyl diphosphate (IPP) with allylic pyrophosphates generating different type of terpenoids. The protein is Isoprenyl transferase of Rickettsia typhi (strain ATCC VR-144 / Wilmington).